Consider the following 354-residue polypeptide: NADH-quinone oxidoreductase subunit H 2 (354 aa).

A run of 8 helical transmembrane segments spans residues 4-24 (IALF…VLLT), 81-101 (ILAP…VPFG), 130-150 (IGLL…ALAG), 170-190 (VSYE…SGSF), 201-221 (GGFW…FIYL), 269-289 (VACI…PGFL), 296-316 (LVPV…YIWV), and 333-353 (WKFL…FVAL).

It belongs to the complex I subunit 1 family. In terms of assembly, NDH-1 is composed of 14 different subunits. Subunits NuoA, H, J, K, L, M, N constitute the membrane sector of the complex.

The protein resides in the cell inner membrane. It carries out the reaction a quinone + NADH + 5 H(+)(in) = a quinol + NAD(+) + 4 H(+)(out). Functionally, NDH-1 shuttles electrons from NADH, via FMN and iron-sulfur (Fe-S) centers, to quinones in the respiratory chain. The immediate electron acceptor for the enzyme in this species is believed to be ubiquinone. Couples the redox reaction to proton translocation (for every two electrons transferred, four hydrogen ions are translocated across the cytoplasmic membrane), and thus conserves the redox energy in a proton gradient. This subunit may bind ubiquinone. This Koribacter versatilis (strain Ellin345) protein is NADH-quinone oxidoreductase subunit H 2.